Consider the following 776-residue polypeptide: DNA topoisomerase 1 (776 aa).

The Toprim domain occupies 1–111 (MKLVIVESPA…VKSDDFFKRV (111 aa)). The Mg(2+) site is built by E7 and D80. The Topo IA-type catalytic domain occupies 132-568 (DTNLVNAQQA…FWSGFNHNIE (437 aa)). Positions 166–171 (SAGRVQ) are interaction with DNA. Y304 acts as the O-(5'-phospho-DNA)-tyrosine intermediate in catalysis. The C4-type zinc-finger motif lies at 600–627 (CPSCNTGELSLKLGKFGAFLACSNYPEC).

The protein belongs to the type IA topoisomerase family. Monomer. Mg(2+) serves as cofactor.

It carries out the reaction ATP-independent breakage of single-stranded DNA, followed by passage and rejoining.. Releases the supercoiling and torsional tension of DNA, which is introduced during the DNA replication and transcription, by transiently cleaving and rejoining one strand of the DNA duplex. Introduces a single-strand break via transesterification at a target site in duplex DNA. The scissile phosphodiester is attacked by the catalytic tyrosine of the enzyme, resulting in the formation of a DNA-(5'-phosphotyrosyl)-enzyme intermediate and the expulsion of a 3'-OH DNA strand. The free DNA strand then undergoes passage around the unbroken strand, thus removing DNA supercoils. Finally, in the religation step, the DNA 3'-OH attacks the covalent intermediate to expel the active-site tyrosine and restore the DNA phosphodiester backbone. The polypeptide is DNA topoisomerase 1 (Rickettsia conorii (strain ATCC VR-613 / Malish 7)).